The chain runs to 608 residues: Elongation factor 4 (608 aa).

Positions 11-193 constitute a tr-type G domain; it reads SKIRNFSIIA…QIVEKVPAPD (183 aa). Residues 23 to 28 and 140 to 143 each bind GTP; these read DHGKST and NKID.

The protein belongs to the TRAFAC class translation factor GTPase superfamily. Classic translation factor GTPase family. LepA subfamily.

Its subcellular location is the cell membrane. The enzyme catalyses GTP + H2O = GDP + phosphate + H(+). Required for accurate and efficient protein synthesis under certain stress conditions. May act as a fidelity factor of the translation reaction, by catalyzing a one-codon backward translocation of tRNAs on improperly translocated ribosomes. Back-translocation proceeds from a post-translocation (POST) complex to a pre-translocation (PRE) complex, thus giving elongation factor G a second chance to translocate the tRNAs correctly. Binds to ribosomes in a GTP-dependent manner. This Bacillus cytotoxicus (strain DSM 22905 / CIP 110041 / 391-98 / NVH 391-98) protein is Elongation factor 4.